Reading from the N-terminus, the 132-residue chain is MNPKKSIQLWELQSLLKGATYKKLIEKKTYEAGKERADNYDFLFMSFISFIVSCRLFILVFTFIFKGFPSAIQVIAMIDAVVNALLILIVLAMLFIGSRKLTVEIRRGEVEDFQENLKAREDTFNSSPYQRY.

2 consecutive transmembrane segments (helical) span residues 44–64 (FMSF…FTFI) and 75–95 (IAMI…AMLF).

The protein resides in the cytoplasm. Its subcellular location is the membrane. This is an uncharacterized protein from Schizosaccharomyces pombe (strain 972 / ATCC 24843) (Fission yeast).